A 100-amino-acid polypeptide reads, in one-letter code: Urease subunit gamma (100 aa).

The protein belongs to the urease gamma subunit family. Heterotrimer of UreA (gamma), UreB (beta) and UreC (alpha) subunits. Three heterotrimers associate to form the active enzyme.

The protein resides in the cytoplasm. It carries out the reaction urea + 2 H2O + H(+) = hydrogencarbonate + 2 NH4(+). The protein operates within nitrogen metabolism; urea degradation; CO(2) and NH(3) from urea (urease route): step 1/1. The chain is Urease subunit gamma from Paracidovorax citrulli (strain AAC00-1) (Acidovorax citrulli).